The following is a 62-amino-acid chain: U8-theraphotoxin-Cg1a 1 (62 aa).

Positions 1-21 are cleaved as a signal peptide; it reads MKTLVLFIIFGLAALFLLSSA. Positions 22 to 29 are excised as a propeptide; it reads NELEETER. 3 cysteine pairs are disulfide-bonded: Cys31-Cys46, Cys38-Cys51, and Cys45-Cys58.

It belongs to the neurotoxin 10 (Hwtx-1) family. 30 (Jztx-14) subfamily. Expressed by the venom gland.

It localises to the secreted. In terms of biological role, probable ion channel inhibitor. In Chilobrachys guangxiensis (Chinese earth tiger tarantula), this protein is U8-theraphotoxin-Cg1a 1.